The sequence spans 213 residues: N-(5'-phosphoribosyl)anthranilate isomerase (213 aa).

Belongs to the TrpF family.

The enzyme catalyses N-(5-phospho-beta-D-ribosyl)anthranilate = 1-(2-carboxyphenylamino)-1-deoxy-D-ribulose 5-phosphate. It functions in the pathway amino-acid biosynthesis; L-tryptophan biosynthesis; L-tryptophan from chorismate: step 3/5. This is N-(5'-phosphoribosyl)anthranilate isomerase from Rhodopseudomonas palustris (strain TIE-1).